The sequence spans 569 residues: Cationic amino acid transporter 5 (569 aa).

At 1–67 the chain is on the cytoplasmic side; that stretch reads MEGEERGYWR…KQSEHEMKRC (67 aa). A helical membrane pass occupies residues 68-88; the sequence is LTWWDLVWFGFGSVIGAGIFV. The Extracellular portion of the chain corresponds to 89-97; that stretch reads LTGQEAHEQ. A helical transmembrane segment spans residues 98–118; that stretch reads AGPAIVLSYVVSGLSAMLSVF. At 119 to 143 the chain is on the cytoplasmic side; that stretch reads CYTEFAVEIPVAGGSFAYLRIELGD. A helical transmembrane segment spans residues 144 to 164; that stretch reads FAAFITAGNILLESIVGTAAV. Residues 165 to 192 are Extracellular-facing; that stretch reads ARAWTSYFATLLNRSPNALRIKTDLSSG. A helical membrane pass occupies residues 193–213; that stretch reads FNLLDPIAVVVIAASATIASI. At 214 to 222 the chain is on the cytoplasmic side; the sequence is STRKTSLLN. Residues 223–243 traverse the membrane as a helical segment; the sequence is WIASAINTLVIFFVIIAGFIH. Topologically, residues 244 to 251 are extracellular; that stretch reads ADTSNLTP. Residues 252 to 272 traverse the membrane as a helical segment; the sequence is FLPFGPEGVFRAAAVVYFAYG. The Cytoplasmic portion of the chain corresponds to 273-290; that stretch reads GFDSIATMAEETKNPSRD. A helical transmembrane segment spans residues 291–311; sequence IPIGLLGSMSIITVIYCLMAL. Topologically, residues 312-341 are extracellular; the sequence is SLSMMQKYTDIDPNAAYSVAFQSVGMKWGK. The helical transmembrane segment at 342 to 362 threads the bilayer; the sequence is YLVALGALKGMTTVLLVGALG. Residues 363 to 389 lie on the Cytoplasmic side of the membrane; the sequence is QARYVTHIARTHMIPPIFALVHPKTGT. The helical transmembrane segment at 390–410 threads the bilayer; sequence PINANLLVAIPSALIAFFSGL. Aspartate 411 is a topological domain (extracellular). A helical membrane pass occupies residues 412-432; that stretch reads VLASLLSISTLFIFTMMPIAL. At 433 to 450 the chain is on the cytoplasmic side; the sequence is LVRRYYVRQDTPRVHLIK. Residues 451–471 traverse the membrane as a helical segment; that stretch reads LITCLLFVVVSSMGTSAYWGM. Residues 472–477 are Extracellular-facing; the sequence is QRKGSW. The helical transmembrane segment at 478-498 threads the bilayer; it reads IGYTVTVPFWFLGTLGIVFFV. The Cytoplasmic portion of the chain corresponds to 499–505; that stretch reads PQQRTPK. Residues 506–526 traverse the membrane as a helical segment; sequence VWGVPLVPWLPCLSIATNIFL. The Extracellular portion of the chain corresponds to 527–537; that stretch reads MGSLGAMAFVR. Residues 538–558 form a helical membrane-spanning segment; the sequence is FGVCTLAMLLYYFLLGLHATF. Topologically, residues 559 to 569 are cytoplasmic; sequence DMAHQQIVPRT.

This sequence belongs to the amino acid-polyamine-organocation (APC) superfamily. Cationic amino acid transporter (CAT) (TC 2.A.3.3) family. In terms of tissue distribution, expressed in roots, stems, flowers, seeds, and leaves. Mostly present in leaf rims and cotyledons of developing seedlings.

The protein localises to the cell membrane. In terms of biological role, high-affinity permease involved in the transport of the cationic amino acids (e.g. arginine, and, to a lower extent, citrulline and glutamate). Transport mostly basic amino acids, and, to a lower extent neutral and acidic amino acids. In Arabidopsis thaliana (Mouse-ear cress), this protein is Cationic amino acid transporter 5 (CAT5).